The chain runs to 130 residues: Small ribosomal subunit protein uS9 (130 aa).

The protein belongs to the universal ribosomal protein uS9 family.

The protein is Small ribosomal subunit protein uS9 of Streptococcus suis (strain 98HAH33).